The primary structure comprises 372 residues: MFDFKVLSRSTNTAGRVGRLSTPHGILSTPQFMPVGTLGTVKGITATQLKDTNAQMILANTFHLHLQPGEAIIKESGGLHSFMSWDQPILTDSGGYQVFSLGKLNKIDDFGVSFKSPRDGSHIELTPEKAIQIQMDLGADVVMAFDQCPPYPASKVEVEEACKRTHLWLERCVATHSKEDQALFGIVQGGCFLDLREESARRVASFHLPGIAIGGVSVGEPSDQIHKIVRHVAPLLPNEVPRYLMGIGTIREMAVAVANGVDFFDCVLPTRLGRHGTALVRDERWNLRNACFRNDYQPLDTTCVCETCTNYNRAYLHHLIRNDELLGLTLLSLHNLSHLIRFSRAMAVAIEDDCFSEDFAPWQKSSIAHYTW.

Asp-92 (proton acceptor) is an active-site residue. Substrate is bound by residues 92 to 96, Asp-146, Gln-188, and Gly-215; that span reads DSGGY. Residues 246–252 are RNA binding; sequence GIGTIRE. Catalysis depends on Asp-265, which acts as the Nucleophile. The interval 270 to 274 is RNA binding; important for wobble base 34 recognition; that stretch reads TRLGR. Residues Cys-303, Cys-305, Cys-308, and His-334 each contribute to the Zn(2+) site.

It belongs to the queuine tRNA-ribosyltransferase family. As to quaternary structure, homodimer. Within each dimer, one monomer is responsible for RNA recognition and catalysis, while the other monomer binds to the replacement base PreQ1. Zn(2+) serves as cofactor.

The enzyme catalyses 7-aminomethyl-7-carbaguanine + guanosine(34) in tRNA = 7-aminomethyl-7-carbaguanosine(34) in tRNA + guanine. It functions in the pathway tRNA modification; tRNA-queuosine biosynthesis. In terms of biological role, catalyzes the base-exchange of a guanine (G) residue with the queuine precursor 7-aminomethyl-7-deazaguanine (PreQ1) at position 34 (anticodon wobble position) in tRNAs with GU(N) anticodons (tRNA-Asp, -Asn, -His and -Tyr). Catalysis occurs through a double-displacement mechanism. The nucleophile active site attacks the C1' of nucleotide 34 to detach the guanine base from the RNA, forming a covalent enzyme-RNA intermediate. The proton acceptor active site deprotonates the incoming PreQ1, allowing a nucleophilic attack on the C1' of the ribose to form the product. After dissociation, two additional enzymatic reactions on the tRNA convert PreQ1 to queuine (Q), resulting in the hypermodified nucleoside queuosine (7-(((4,5-cis-dihydroxy-2-cyclopenten-1-yl)amino)methyl)-7-deazaguanosine). This Prochlorococcus marinus (strain SARG / CCMP1375 / SS120) protein is Queuine tRNA-ribosyltransferase.